The following is an 882-amino-acid chain: Lon protease homolog, mitochondrial (882 aa).

Residues 1-34 (MIHVLKSRSTLLTASSIVRTSVGSSSRYSQTRTY) constitute a mitochondrion transit peptide. Positions 68–281 (TLGLPLVSRP…KALVLLNRER (214 aa)) constitute a Lon N-terminal domain. 435–442 (GPPGTGKT) contributes to the ATP binding site. The region spanning 687–878 (PLPHGIVMGL…DKVYEVAFSS (192 aa)) is the Lon proteolytic domain. Active-site residues include Ser784 and Lys827.

It belongs to the peptidase S16 family. As to quaternary structure, homohexamer or homoheptamer. Organized in a ring with a central cavity.

It localises to the mitochondrion matrix. It carries out the reaction Hydrolysis of proteins in presence of ATP.. ATP-dependent serine protease that mediates the selective degradation of misfolded, unassembled or oxidatively damaged polypeptides as well as certain short-lived regulatory proteins in the mitochondrial matrix. May also have a chaperone function in the assembly of inner membrane protein complexes. Participates in the regulation of mitochondrial gene expression and in the maintenance of the integrity of the mitochondrial genome. Binds to mitochondrial DNA in a site-specific manner. This chain is Lon protease homolog, mitochondrial, found in Phaeodactylum tricornutum (strain CCAP 1055/1).